The sequence spans 677 residues: Methionine--tRNA ligase (677 aa).

The short motif at 15–25 (PYANGSIHLGH) is the 'HIGH' region element. Zn(2+) is bound by residues C146, C149, C159, and C162. A 'KMSKS' region motif is present at residues 333–337 (KMSKS). K336 lines the ATP pocket. The 103-residue stretch at 575–677 (DFAKVDLRVA…AGAKPGHQVK (103 aa)) folds into the tRNA-binding domain.

It belongs to the class-I aminoacyl-tRNA synthetase family. MetG type 1 subfamily. As to quaternary structure, homodimer. The cofactor is Zn(2+).

The protein localises to the cytoplasm. The catalysed reaction is tRNA(Met) + L-methionine + ATP = L-methionyl-tRNA(Met) + AMP + diphosphate. Its function is as follows. Is required not only for elongation of protein synthesis but also for the initiation of all mRNA translation through initiator tRNA(fMet) aminoacylation. The chain is Methionine--tRNA ligase from Escherichia fergusonii (strain ATCC 35469 / DSM 13698 / CCUG 18766 / IAM 14443 / JCM 21226 / LMG 7866 / NBRC 102419 / NCTC 12128 / CDC 0568-73).